A 437-amino-acid polypeptide reads, in one-letter code: Lipid II isoglutaminyl synthase (glutamine-hydrolyzing) subunit MurT (437 aa).

Residues cysteine 202, cysteine 205, cysteine 224, and cysteine 226 each contribute to the Zn(2+) site. Aspartate 349 is a catalytic residue.

This sequence belongs to the MurCDEF family. MurT subfamily. As to quaternary structure, forms a heterodimer with GatD.

The enzyme catalyses beta-D-GlcNAc-(1-&gt;4)-Mur2Ac(oyl-L-Ala-gamma-D-Glu-L-Lys-D-Ala-D-Ala)-di-trans,octa-cis-undecaprenyl diphosphate + L-glutamine + ATP + H2O = beta-D-GlcNAc-(1-&gt;4)-Mur2Ac(oyl-L-Ala-D-isoglutaminyl-L-Lys-D-Ala-D-Ala)-di-trans,octa-cis-undecaprenyl diphosphate + L-glutamate + ADP + phosphate + H(+). It catalyses the reaction beta-D-GlcNAc-(1-&gt;4)-Mur2Ac(oyl-L-Ala-gamma-D-Glu-L-Lys-D-Ala-D-Ala)-di-trans,octa-cis-undecaprenyl diphosphate + ATP = beta-D-GlcNAc-(1-&gt;4)-Mur2Ac(oyl-L-Ala-gamma-D-O-P-Glu-L-Lys-D-Ala-D-Ala)-di-trans,octa-cis-undecaprenyl diphosphate + ADP. The catalysed reaction is beta-D-GlcNAc-(1-&gt;4)-Mur2Ac(oyl-L-Ala-gamma-D-O-P-Glu-L-Lys-D-Ala-D-Ala)-di-trans,octa-cis-undecaprenyl diphosphate + NH4(+) = beta-D-GlcNAc-(1-&gt;4)-Mur2Ac(oyl-L-Ala-D-isoglutaminyl-L-Lys-D-Ala-D-Ala)-di-trans,octa-cis-undecaprenyl diphosphate + phosphate + H(+). Its pathway is cell wall biogenesis; peptidoglycan biosynthesis. Its function is as follows. The lipid II isoglutaminyl synthase complex catalyzes the formation of alpha-D-isoglutamine in the cell wall lipid II stem peptide. The MurT subunit catalyzes the ATP-dependent amidation of D-glutamate residue of lipid II, converting it to an isoglutamine residue. This Staphylococcus aureus (strain N315) protein is Lipid II isoglutaminyl synthase (glutamine-hydrolyzing) subunit MurT.